Reading from the N-terminus, the 97-residue chain is Citrate lyase acyl carrier protein 2 (97 aa).

Serine 14 carries the post-translational modification O-(phosphoribosyl dephospho-coenzyme A)serine.

Belongs to the CitD family. Oligomer with a subunit composition of (alpha,beta,gamma)6.

It localises to the cytoplasm. Its function is as follows. Covalent carrier of the coenzyme of citrate lyase. The chain is Citrate lyase acyl carrier protein 2 from Salmonella paratyphi A (strain ATCC 9150 / SARB42).